A 1148-amino-acid chain; its full sequence is Envelopment polyprotein (1148 aa).

The N-terminal stretch at 1-23 is a signal peptide; it reads MGKSSPVCLYLILQGLLLFDTVN. The Lumenal segment spans residues 24–496; it reads AKNLNELKME…PGLHGWATVL (473 aa). Cystine bridges form between C34/C159, C68/C165, C117/C136, C141/C146, C183/C193, and C218/C257. N142 is a glycosylation site (N-linked (GlcNAc...) asparagine; by host). N-linked (GlcNAc...) asparagine; by host glycosylation is present at N357. Disulfide bonds link C386/C445, C390/C399, C415/C434, and C462/C485. N409 is a glycosylation site (N-linked (GlcNAc...) asparagine; by host). The helical transmembrane segment at 497–517 threads the bilayer; that stretch reads LLLTFCFGWVLIPTITMILLK. At 518 to 637 the chain is on the cytoplasmic side; sequence ILIAFAYLCS…LSLFRYRSRF (120 aa). Residues 526–543 form a binding to the ribonucleoprotein region; the sequence is CSKYNTDSKFRILVEKVK. 2 consecutive CCHC-type zinc fingers follow at residues 555–575 and 580–601; these read CEVC…RKSC and CPYC…FKVC. Binding to the ribonucleoprotein stretches follow at residues 598-615 and 621-635; these read FKVC…KKSL and MQGC…RYRS. The ITAM domain occupies 621–644; the sequence is MQGCYRTLSLFRYRSRFFVGLVWC. Positions 625–628 match the YxxL motif; sequence YRTL. Residues 638–658 form a helical membrane-spanning segment; that stretch reads FVGLVWCMLLVLELIVWAASA. The Lumenal segment spans residues 659–1115; sequence ETQNLNDGWT…WVLGVLNGNW (457 aa). Cystine bridges form between C745-C780, C749-C787, C761-C894, C775-C905, C790-C913, C816-C825, C833-C842, and C873-C877. A fusion loop region spans residues 767–787; sequence YEYETGWGCNPPDCPGVGTGC. A glycan (N-linked (GlcNAc...) asparagine; by host) is linked at N937. Cystine bridges form between C979–C1009, C1002–C1054, C1019–C1024, C1055–C1060, and C1094–C1098. The chain crosses the membrane as a helical span at residues 1116-1136; that stretch reads MVVAVLIALLILSIFLFALCC. Positions 1131–1148 are binding to the ribonucleoprotein; sequence LFALCCPRRPSYKKDHKP. At 1137–1148 the chain is on the cytoplasmic side; it reads PRRPSYKKDHKP.

The protein belongs to the hantavirus envelope glycoprotein family. As to quaternary structure, homodimer. Homotetramer; forms heterotetrameric Gn-Gc spikes in the pre-fusion conformation. Interacts (via C-terminus) with the nucleoprotein. Interacts with host TUFM; this interaction contributes to the virus-induced degradation of mitochondria by autophagy, which leads to degradation of host MAVS and inhibition of type I interferon (IFN) responses. Interacts with host MAP1LC3B; this interaction contributes to the virus-induced degradation of mitochondria by autophagy, which leads to degradation of host MAVS and inhibition of type I interferon (IFN) responses. Homodimer. Homotetramer; forms heterotetrameric Gn-Gc spikes in the pre-fusion conformation. Homotrimer; forms homotrimer in the post-fusion conformation at acidic pH. Interacts (via C-terminus) with the nucleoprotein. Post-translationally, envelope polyprotein precursor is quickly cleaved in vivo just after synthesis, presumably by host signal peptidase.

It is found in the virion membrane. Its subcellular location is the host cell surface. The protein localises to the host Golgi apparatus membrane. The protein resides in the host endoplasmic reticulum membrane. It localises to the host mitochondrion. In terms of biological role, forms homotetramers with glycoprotein C at the surface of the virion. Attaches the virion to host cell receptors including integrin ITGAV/ITGB3. This attachment induces virion internalization predominantly through clathrin-dependent endocytosis. Mediates the assembly and budding of infectious virus particles through its interaction with the nucleocapsid protein and the viral genome. May dysregulate normal immune and endothelial cell responses through an ITAM motif. Translocates to mitochondria, binds to host TUFM and recruits MAP1LC3B. These interactions induce mitochondrial autophagy and therefore destruction of host MAVS leading to inhibition of type I interferon (IFN) responses. Concomitant breakdown of glycoprotein N is apparently prevented by the nucleoprotein that may inhibit Gn-stimulated autophagosome-lysosome fusion. Interacts with the viral genomic RNA. Functionally, forms heterooctamers with glycoprotein N at the surface of the virion. Attaches the virion to host cell receptors including integrin ITGAV/ITGB3. This attachment induces virion internalization predominantly through clathrin-dependent endocytosis. Class II fusion protein that promotes fusion of viral membrane with host endosomal membrane after endocytosis of the virion. In Homo sapiens (Human), this protein is Envelopment polyprotein (GP).